Here is a 388-residue protein sequence, read N- to C-terminus: ATP phosphoribosyltransferase regulatory subunit (388 aa).

The protein belongs to the class-II aminoacyl-tRNA synthetase family. HisZ subfamily. As to quaternary structure, heteromultimer composed of HisG and HisZ subunits.

It localises to the cytoplasm. It functions in the pathway amino-acid biosynthesis; L-histidine biosynthesis; L-histidine from 5-phospho-alpha-D-ribose 1-diphosphate: step 1/9. Its function is as follows. Required for the first step of histidine biosynthesis. May allow the feedback regulation of ATP phosphoribosyltransferase activity by histidine. The sequence is that of ATP phosphoribosyltransferase regulatory subunit from Acinetobacter baylyi (strain ATCC 33305 / BD413 / ADP1).